A 72-amino-acid polypeptide reads, in one-letter code: Palustrin-2CG1 (72 aa).

A signal peptide spans 1-22; that stretch reads MFTMKKPLLLLFFLGTISLSLC. Positions 23–39 are cleaved as a propeptide — removed in mature form; that stretch reads QEERGADEDDGEMTEEV. Cys64 and Cys70 form a disulfide bridge.

In terms of tissue distribution, expressed by the skin glands.

The protein resides in the secreted. In terms of biological role, antimicrobial peptide active against a variety of Gram-positive and some Gram-negative bacterial strains. Has antifungal activity against a slime mold isolate. Has hemolytic activity against human erythrocytes. The protein is Palustrin-2CG1 of Amolops chunganensis (Chungan torrent frog).